The chain runs to 285 residues: Hydrolase in pqqF 5'region (285 aa).

The region spanning 22–258 (MRVALYQCPP…EALIIGTLDR (237 aa)) is the CN hydrolase domain. The Proton acceptor role is filled by E60. K131 serves as the catalytic Proton donor. The active-site Nucleophile is C165.

This sequence belongs to the carbon-nitrogen hydrolase superfamily. NIT1/NIT2 family.

This Pseudomonas protegens (strain DSM 19095 / LMG 27888 / CFBP 6595 / CHA0) protein is Hydrolase in pqqF 5'region.